The following is a 173-amino-acid chain: Globin, cuticular isoform (173 aa).

The first 16 residues, 1 to 16 (MLWFVAVCFAIASVSA), serve as a signal peptide directing secretion. One can recognise a Globin domain in the interval 17-166 (MSPADVKKHT…FNSEAQHQLE (150 aa)). His113 is a heme b binding site.

The protein belongs to the globin family. As to expression, expressed only by adult nematodes in the gut.

It localises to the secreted. It is found in the extracellular space. This is Globin, cuticular isoform (GLBC) from Nippostrongylus brasiliensis (Rat hookworm).